We begin with the raw amino-acid sequence, 691 residues long: Elongation factor G (691 aa).

In terms of domain architecture, tr-type G spans 8-282 (HMVRNIGIAA…AVVDYLPAPD (275 aa)). GTP contacts are provided by residues 17–24 (AHIDAGKT), 81–85 (DTPGH), and 135–138 (NKMD).

This sequence belongs to the TRAFAC class translation factor GTPase superfamily. Classic translation factor GTPase family. EF-G/EF-2 subfamily.

The protein resides in the cytoplasm. In terms of biological role, catalyzes the GTP-dependent ribosomal translocation step during translation elongation. During this step, the ribosome changes from the pre-translocational (PRE) to the post-translocational (POST) state as the newly formed A-site-bound peptidyl-tRNA and P-site-bound deacylated tRNA move to the P and E sites, respectively. Catalyzes the coordinated movement of the two tRNA molecules, the mRNA and conformational changes in the ribosome. The chain is Elongation factor G from Campylobacter hominis (strain ATCC BAA-381 / DSM 21671 / CCUG 45161 / LMG 19568 / NCTC 13146 / CH001A).